The sequence spans 281 residues: Elongation factor Ts (281 aa).

An involved in Mg(2+) ion dislocation from EF-Tu region spans residues 80–83 (TDFV).

It belongs to the EF-Ts family.

It localises to the cytoplasm. Functionally, associates with the EF-Tu.GDP complex and induces the exchange of GDP to GTP. It remains bound to the aminoacyl-tRNA.EF-Tu.GTP complex up to the GTP hydrolysis stage on the ribosome. In Vibrio parahaemolyticus serotype O3:K6 (strain RIMD 2210633), this protein is Elongation factor Ts.